The primary structure comprises 241 residues: UDP-2,3-diacylglucosamine hydrolase (241 aa).

Mn(2+) contacts are provided by aspartate 8, histidine 10, aspartate 41, asparagine 79, and histidine 114. Asparagine 79–arginine 80 provides a ligand contact to substrate. 4 residues coordinate substrate: aspartate 122, lysine 164, lysine 167, and histidine 195. Residues histidine 195 and histidine 197 each coordinate Mn(2+).

The protein belongs to the LpxH family. Mn(2+) is required as a cofactor.

It is found in the cell inner membrane. The catalysed reaction is UDP-2-N,3-O-bis[(3R)-3-hydroxytetradecanoyl]-alpha-D-glucosamine + H2O = 2-N,3-O-bis[(3R)-3-hydroxytetradecanoyl]-alpha-D-glucosaminyl 1-phosphate + UMP + 2 H(+). It participates in glycolipid biosynthesis; lipid IV(A) biosynthesis; lipid IV(A) from (3R)-3-hydroxytetradecanoyl-[acyl-carrier-protein] and UDP-N-acetyl-alpha-D-glucosamine: step 4/6. Hydrolyzes the pyrophosphate bond of UDP-2,3-diacylglucosamine to yield 2,3-diacylglucosamine 1-phosphate (lipid X) and UMP by catalyzing the attack of water at the alpha-P atom. Involved in the biosynthesis of lipid A, a phosphorylated glycolipid that anchors the lipopolysaccharide to the outer membrane of the cell. The protein is UDP-2,3-diacylglucosamine hydrolase of Aliivibrio fischeri (strain MJ11) (Vibrio fischeri).